Reading from the N-terminus, the 230-residue chain is MEPSTPPMRGLCTPSTPESPGSFKGVIDASLEGNSSIMIDEIPESDLPAPQVSTFPPTPAKTPKKQLLPNLMLQDRSNSLERCMEEDREHNPFLSSSDNQLLSRKKRKPTPPPSDGLYYVFRGKRIKKSFRPGTDLSTFKPKLLFADSAPSSSSDNPTSSVDLNDYSQIGILPPNLNSIGNKMFSLKSRVPSSSSGSFVAPPPQMRLPAYSSPQKSRSNTKDENRHNLLR.

Disordered regions lie at residues 1 to 25 (MEPS…SFKG), 43 to 118 (PESD…DGLY), and 188 to 230 (SRVP…NLLR). Position 13 is a phosphothreonine; by MAPK (T13). S19 is subject to Phosphoserine; by MAPK. T58 and T62 each carry phosphothreonine; by cdc2. Positions 67 to 147 (LLPNLMLQDR…TFKPKLLFAD (81 aa)) are CDK inhibitory and cyclin-binding. Basic and acidic residues predominate over residues 78-91 (NSLERCMEEDREHN). Residues 93–102 (FLSSSDNQLL) show a composition bias toward polar residues. Positions 101–230 (LLSRKKRKPT…KDENRHNLLR (130 aa)) are required for activity as a cdc2 kinase inhibitor. The segment covering 188-199 (SRVPSSSSGSFV) has biased composition (low complexity). The segment covering 219–230 (NTKDENRHNLLR) has biased composition (basic and acidic residues).

As to quaternary structure, interacts with cdc13, cig2 and pop1. Phosphorylated by cig1-associated cdc2 which leads to increased stability. Phosphorylation by MAPK reduces cdc2 kinase inhibitor ability.

It localises to the nucleus. In terms of biological role, regulator of cell cycle G1 phase progression. Ensures the correct sequence of S phase and mitosis in the cell by acting as an inhibitor of the cdc2 mitotic kinase. Probably interacts with cdc2 to inhibit its action until the cell mass for Start is reached. Determines the length of the pre-Start G1 period and prevents mitosis from happening in early G1 cells. Required for maintaining pheromone-induced G1 arrest. Acts as an adapter protein since interaction with cdc13 promotes cyclin proteolysis during G1. Becomes a target for degradation at the G1/S phase transition, following phosphorylation by cig1-associated cdc2 at the G1/S phase transition. This Schizosaccharomyces pombe (strain 972 / ATCC 24843) (Fission yeast) protein is Cyclin-dependent kinase inhibitor rum1 (rum1).